We begin with the raw amino-acid sequence, 1704 residues long: Arf-GAP with Rho-GAP domain, ANK repeat and PH domain-containing protein 2 (1704 aa).

The SAM domain maps to 6–70; the sequence is EVNVDIKDFL…LKQLQIILSK (65 aa). Tyr77 is subject to Phosphotyrosine. The interval 126–161 is disordered; it reads NLEDSDASVERSQYPQSDDKLSPPKRDFPTAEEPHL. A compositionally biased stretch (basic and acidic residues) spans 142-160; it reads SDDKLSPPKRDFPTAEEPH. 2 consecutive PH domains span residues 482 to 574 and 587 to 679; these read KKVK…NALK and TPEK…QSIA. The Arf-GAP domain maps to 676–811; it reads QSIAETLSDY…TLLASLTKEE (136 aa). The segment at 700-723 adopts a C4-type zinc-finger fold; the sequence is CADCKAPDPDWASINLCVVICKKC. PH domains lie at 878 to 1003 and 1014 to 1114; these read DIHS…KHFV and DYDL…AGTD. Residues 1116-1297 enclose the Rho-GAP domain; it reads NALQDQQLSK…DLINNYVEIF (182 aa). The Ras-associating domain occupies 1326–1420; the sequence is GDLLIEVYVE…AYLVVKRFLT (95 aa). Residues 1434 to 1537 form the PH 5 domain; the sequence is GSIKEGILKI…WMTSIFIAQH (104 aa). Ser1632 carries the phosphoserine modification. Residues 1636–1675 form a disordered region; that stretch reads LEDTEPEAPLGQPKGHKGLKTLRKTEDRNSKATLDSDHKL. The span at 1658–1675 shows a compositional bias: basic and acidic residues; sequence RKTEDRNSKATLDSDHKL.

As to expression, detected in brain, thymus, lymph node, thyroid, spinal cord, trachea, heart, skeletal muscle, spleen, kidney, liver, placenta, lung and peripheral blood leukocytes.

The protein localises to the cytoplasm. In terms of biological role, phosphatidylinositol 3,4,5-trisphosphate-dependent GTPase-activating protein that modulates actin cytoskeleton remodeling by regulating ARF and RHO family members. Is activated by phosphatidylinositol 3,4,5-trisphosphate (PtdIns(3,4,5)P3) binding. Can be activated by phosphatidylinositol 3,4-bisphosphate (PtdIns(3,4,5)P2) binding, albeit with lower efficiency. This Homo sapiens (Human) protein is Arf-GAP with Rho-GAP domain, ANK repeat and PH domain-containing protein 2 (ARAP2).